The chain runs to 112 residues: UPF0342 protein STH1710 (112 aa).

The protein belongs to the UPF0342 family.

In Symbiobacterium thermophilum (strain DSM 24528 / JCM 14929 / IAM 14863 / T), this protein is UPF0342 protein STH1710.